Reading from the N-terminus, the 1481-residue chain is Cystic fibrosis transmembrane conductance regulator (1481 aa).

Over 1–77 (MQKSPLVKAS…KLINALRRCF (77 aa)) the chain is Cytoplasmic. The chain crosses the membrane as a helical span at residues 78–98 (LWRFIFYGILLYLGEVTKAVQ). Residues 81–365 (FIFYGILLYL…GAVQTWYDSL (285 aa)) form the ABC transmembrane type-1 1 domain. Over 99–122 (PLLLGRIIASYDPDNKEERSIAIY) the chain is Extracellular. The helical transmembrane segment at 123–146 (LAIGLCLLFIVRTLLLHPAIFGLQ) threads the bilayer. Over 147-195 (HIGMQMRIAMFSLIYKKTLKLSSRVLDKISIGQLVSLLSNNLNKFDEGL) the chain is Cytoplasmic. Residues 196–216 (ALAHFVWIAPLQVTLLMGLLW) form a helical membrane-spanning segment. Over 217 to 222 (DLLQAS) the chain is Extracellular. The helical transmembrane segment at 223 to 243 (AFCGLAVLIVLALFQAWLGKM) threads the bilayer. The Cytoplasmic segment spans residues 244–298 (MMKYRDQRAGKINERLVITSEMIENIQSVKAYCWEEAMEKMIENLRQTELKLTRK). A helical transmembrane segment spans residues 299-319 (AAYMRYFNSAAFFFSGFFVVF). The Extracellular segment spans residues 320–339 (LSVLPYAFLQGIILRKIFTT). A helical transmembrane segment spans residues 340–358 (ISFCIVLRMAITRQFPGAV). The Cytoplasmic segment spans residues 359 to 859 (QTWYDSLGAI…YLRYITVHKS (501 aa)). Residues tryptophan 401, serine 435, 459 to 466 (GSTGAGKT), and glutamine 494 each bind ATP. An ABC transporter 1 domain is found at 424–647 (NGDNKLFFSN…RPDFSSKLMG (224 aa)). A lipid anchor (S-palmitoyl cysteine) is attached at cysteine 525. Residue serine 550 is modified to Phosphoserine. The segment at 655-832 (SAERRNSILT…EEINEEDLKE (178 aa)) is disordered R region. A phosphoserine; by PKA mark is found at serine 661 and serine 671. Serine 687 bears the Phosphoserine; by PKC mark. Lysine 689 is covalently cross-linked (Glycyl lysine isopeptide (Lys-Gly) (interchain with G-Cter in ubiquitin)). Phosphoserine; by PKA occurs at positions 701 and 713. Position 718 is a phosphothreonine (threonine 718). Phosphoserine; by PKA is present on residues serine 738, serine 769, serine 796, and serine 814. Residues 860–880 (LILVLIWCLIIFLAEVAASLV) form a helical membrane-spanning segment. The ABC transmembrane type-1 2 domain occupies 860–1156 (LILVLIWCLI…AVNSSIDVDS (297 aa)). Residues 881-919 (VLWLLKNNTPQQEMNSTQSGNRSYPVIITNTSFYYIFYI) lie on the Extracellular side of the membrane. N-linked (GlcNAc...) asparagine glycosylation is found at asparagine 895 and asparagine 901. The chain crosses the membrane as a discontinuously helical span at residues 920–940 (YVGVADTLLALGLFRGLPLVH). The Cytoplasmic portion of the chain corresponds to 941 to 991 (TLITVSKILHHKMLRSVLQAPMSTLNALKAGGILNRFSKDIAILDDLLPLT). Residues 992–1012 (IFDFIQLLLIVIGAIAVVSVL) traverse the membrane as a helical segment. Residues 1013–1014 (QP) are Extracellular-facing. The chain crosses the membrane as a helical span at residues 1015–1035 (YIFLATVPVIAAFIMLRAYFL). The Cytoplasmic portion of the chain corresponds to 1036–1096 (HTSQQLKQLE…TANWFLYLST (61 aa)). A helical membrane pass occupies residues 1097 to 1117 (LRWFQMRIEMIFVIFFIAVTF). Topologically, residues 1118–1131 (ISILTTGEGQGSVG) are extracellular. Residues 1132-1152 (IILTLAMNIMSTLQWAVNSSI) form a helical membrane-spanning segment. The Cytoplasmic portion of the chain corresponds to 1153 to 1481 (DVDSLMRSVS…TEEEVQETRL (329 aa)). Residues 1211–1444 (MIVKDLTAKY…KSLFRQAISS (234 aa)) enclose the ABC transporter 2 domain. ATP contacts are provided by residues tyrosine 1220 and 1245–1252 (GRTGSGKS). The interaction with GORASP2 stretch occupies residues 1387–1481 (RTIKQAFADC…TEEEVQETRL (95 aa)). Cysteine 1396 carries S-palmitoyl cysteine lipidation. 2 positions are modified to phosphoserine: serine 1445 and serine 1457. A compositionally biased stretch (basic residues) spans 1453–1462 (HRNSSKHKSR). The tract at residues 1453-1481 (HRNSSKHKSRSQITALKEETEEEVQETRL) is disordered. The segment covering 1471-1481 (ETEEEVQETRL) has biased composition (acidic residues). The PDZ-binding signature appears at 1479-1481 (TRL).

Belongs to the ABC transporter superfamily. ABCC family. CFTR transporter (TC 3.A.1.202) subfamily. As to quaternary structure, monomer; does not require oligomerization for channel activity. May form oligomers in the membrane. Interacts with SLC26A3, SLC26A6 and NHERF1. Interacts with SHANK2. Interacts with MYO6. Interacts (via C-terminus) with GOPC (via PDZ domain); this promotes CFTR internalization and thereby decreases channel activity. Interacts with SLC4A7 through NHERF1. Found in a complex with MYO5B and RAB11A. Interacts with ANO1. Interacts with SLC26A8. Interacts with AHCYL1; the interaction increases CFTR activity. Interacts with CSE1L. The core-glycosylated form interacts with GORASP2 (via PDZ GRASP-type 1 domain) in respone to ER stress. Interacts with MARCHF2; the interaction leads to CFTR ubiqtuitination and degradation. Interacts with ADGRG2. Post-translationally, N-glycosylated. In terms of processing, phosphorylated; cAMP treatment promotes phosphorylation and activates the channel. Dephosphorylation decreases the ATPase activity (in vitro). Phosphorylation at PKA sites activates the channel. Phosphorylation at PKC sites enhances the response to phosphorylation by PKA. Phosphorylated by AMPK; this inhibits channel activity. Ubiquitinated, leading to its degradation in the lysosome. Deubiquitination by USP10 in early endosomes enhances its endocytic recycling to the cell membrane. Ubiquitinated by RNF185 during ER stress. Ubiquitinated by MARCHF2.

The protein localises to the apical cell membrane. It localises to the early endosome membrane. It is found in the cell membrane. The protein resides in the recycling endosome membrane. Its subcellular location is the endoplasmic reticulum membrane. The protein localises to the nucleus. It catalyses the reaction ATP + H2O + closed Cl(-) channel = ADP + phosphate + open Cl(-) channel.. The enzyme catalyses chloride(in) = chloride(out). The catalysed reaction is hydrogencarbonate(in) = hydrogencarbonate(out). It carries out the reaction ATP + H2O = ADP + phosphate + H(+). Its function is as follows. Epithelial ion channel that plays an important role in the regulation of epithelial ion and water transport and fluid homeostasis. Mediates the transport of chloride ions across the cell membrane. Possesses an intrinsic ATPase activity and utilizes ATP to gate its channel; the passive flow of anions through the channel is gated by cycles of ATP binding and hydrolysis by the ATP-binding domains. The ion channel is also permeable to HCO(3)(-); selectivity depends on the extracellular chloride concentration. Exerts its function also by modulating the activity of other ion channels and transporters. Contributes to the regulation of the pH and the ion content of the epithelial fluid layer. Modulates the activity of the epithelial sodium channel (ENaC) complex, in part by regulating the cell surface expression of the ENaC complex. May regulate bicarbonate secretion and salvage in epithelial cells by regulating the transporter SLC4A7. Can inhibit the chloride channel activity of ANO1. Plays a role in the chloride and bicarbonate homeostasis during sperm epididymal maturation and capacitation. The polypeptide is Cystic fibrosis transmembrane conductance regulator (Cavia porcellus (Guinea pig)).